We begin with the raw amino-acid sequence, 888 residues long: Alanine--tRNA ligase (888 aa).

H571, H575, C674, and H678 together coordinate Zn(2+).

The protein belongs to the class-II aminoacyl-tRNA synthetase family. The cofactor is Zn(2+).

It is found in the cytoplasm. The enzyme catalyses tRNA(Ala) + L-alanine + ATP = L-alanyl-tRNA(Ala) + AMP + diphosphate. Its function is as follows. Catalyzes the attachment of alanine to tRNA(Ala) in a two-step reaction: alanine is first activated by ATP to form Ala-AMP and then transferred to the acceptor end of tRNA(Ala). Also edits incorrectly charged Ser-tRNA(Ala) and Gly-tRNA(Ala) via its editing domain. In Nocardia farcinica (strain IFM 10152), this protein is Alanine--tRNA ligase.